We begin with the raw amino-acid sequence, 93 residues long: Large ribosomal subunit protein uL23cz/uL23cy (93 aa).

This sequence belongs to the universal ribosomal protein uL23 family. As to quaternary structure, part of the 50S ribosomal subunit.

The protein localises to the plastid. It localises to the chloroplast. In terms of biological role, binds to 23S rRNA. In Nandina domestica (Heavenly bamboo), this protein is Large ribosomal subunit protein uL23cz/uL23cy (rpl23-A).